The sequence spans 389 residues: Mesotocin receptor (389 aa).

At 1-50 the chain is on the extracellular side; it reads MEGLCLNLDCSELPNSSWVNSSMENQNHSSNSTRDPLKRNEEVAKVEVTV. Asn15, Asn20, Asn27, and Asn31 each carry an N-linked (GlcNAc...) asparagine glycan. A helical membrane pass occupies residues 51-71; it reads LALILFLALAGNICVLLGIYI. The Cytoplasmic segment spans residues 72-87; the sequence is NRHKHSRMYFFMKHLS. Residues 88–108 traverse the membrane as a helical segment; it reads IADLVVAIFQVLPQLIWDITF. The Extracellular portion of the chain corresponds to 109-119; sequence RFYAPDLVCRL. Cys117 and Cys192 are joined by a disulfide. The chain crosses the membrane as a helical span at residues 120–140; that stretch reads VTYLQVVGMFASTYMLLLMSL. At 141-159 the chain is on the cytoplasmic side; that stretch reads DRCLAICQPLRSLHRRSDC. The chain crosses the membrane as a helical span at residues 160-180; it reads VYVLFTWILSFLLSTPQTVIF. Residues 181–207 are Extracellular-facing; that stretch reads SLTEVGNGVYDCRADFIQPWGPKAYIT. Residues 208–228 traverse the membrane as a helical segment; that stretch reads WITLAVYIIPVMILSVCYGLI. Residues 229 to 275 lie on the Cytoplasmic side of the membrane; it reads SYKIWQNIRLKTVCESNLRLSTSRRATLSRVSSVRLISKAKIRTVKM. A helical membrane pass occupies residues 276–296; the sequence is TFIIVLAYIVCWTPFFFVQMW. Over 297 to 308 the chain is Extracellular; that stretch reads SVWDPNPPKEAS. A helical transmembrane segment spans residues 309–329; sequence LFIIAMLLGSLNSCCNPWIYM. The Cytoplasmic portion of the chain corresponds to 330 to 389; it reads LFTGHLFHDLLQSFLCCSARYLKTQQQGSDLSASRKSNSSTFVLSRKSSSQKSITQPSTA. The segment at 360–389 is disordered; that stretch reads LSASRKSNSSTFVLSRKSSSQKSITQPSTA.

This sequence belongs to the G-protein coupled receptor 1 family. Vasopressin/oxytocin receptor subfamily. Highly expressed in the bladder. Also expressed in kidney, brain and skeletal muscle.

The protein resides in the cell membrane. Binds to mesotocin and may play a role in the regulation of water and salt transport. The protein is Mesotocin receptor of Rhinella marina (Cane toad).